Consider the following 55-residue polypeptide: Large ribosomal subunit protein bL33 (55 aa).

A compositionally biased stretch (basic and acidic residues) spans 1–11; sequence MAKGSREKIKL. The tract at residues 1–32 is disordered; sequence MAKGSREKIKLESSASTGHFYTTSKNKRTKPE. Residues 13-24 are compositionally biased toward polar residues; that stretch reads SSASTGHFYTTS.

The protein belongs to the bacterial ribosomal protein bL33 family.

The polypeptide is Large ribosomal subunit protein bL33 (Polynucleobacter necessarius subsp. necessarius (strain STIR1)).